The sequence spans 794 residues: DNA ligase (794 aa).

Residues 1–47 are disordered; the sequence is MEEDLFSLAAGKQPSQQATNETAPRAGEARENAGTDHPGNAEDPAHR. Positions 13–22 are enriched in polar residues; it reads QPSQQATNET. Residues 27 to 47 are compositionally biased toward basic and acidic residues; that stretch reads GEARENAGTDHPGNAEDPAHR. NAD(+) is bound by residues 73 to 77, 122 to 123, and glutamate 160; these read DAEYD and SI. Lysine 162 serves as the catalytic N6-AMP-lysine intermediate. 4 residues coordinate NAD(+): arginine 183, glutamate 219, lysine 335, and lysine 359. Zn(2+) is bound by residues cysteine 457, cysteine 460, cysteine 475, and cysteine 480. The BRCT domain occupies 717–794; sequence IPAGSLSGKT…EEDFYKMIGN (78 aa).

The protein belongs to the NAD-dependent DNA ligase family. LigA subfamily. The cofactor is Mg(2+). It depends on Mn(2+) as a cofactor.

It carries out the reaction NAD(+) + (deoxyribonucleotide)n-3'-hydroxyl + 5'-phospho-(deoxyribonucleotide)m = (deoxyribonucleotide)n+m + AMP + beta-nicotinamide D-nucleotide.. In terms of biological role, DNA ligase that catalyzes the formation of phosphodiester linkages between 5'-phosphoryl and 3'-hydroxyl groups in double-stranded DNA using NAD as a coenzyme and as the energy source for the reaction. It is essential for DNA replication and repair of damaged DNA. This is DNA ligase from Akkermansia muciniphila (strain ATCC BAA-835 / DSM 22959 / JCM 33894 / BCRC 81048 / CCUG 64013 / CIP 107961 / Muc).